Reading from the N-terminus, the 946-residue chain is Protein translocase subunit SecA (946 aa).

ATP contacts are provided by residues Gln-87, 105-109 (GEGKT), and Asp-524. Positions 904–933 (PAQTTDKADRDPNKPETWGKVGRNEDCPCG) are disordered. Residues Cys-930, Cys-932, Cys-941, and His-942 each coordinate Zn(2+).

The protein belongs to the SecA family. As to quaternary structure, monomer and homodimer. Part of the essential Sec protein translocation apparatus which comprises SecA, SecYEG and auxiliary proteins SecDF-YajC and YidC. Zn(2+) serves as cofactor.

The protein resides in the cell inner membrane. Its subcellular location is the cytoplasm. The enzyme catalyses ATP + H2O + cellular proteinSide 1 = ADP + phosphate + cellular proteinSide 2.. Its function is as follows. Part of the Sec protein translocase complex. Interacts with the SecYEG preprotein conducting channel. Has a central role in coupling the hydrolysis of ATP to the transfer of proteins into and across the cell membrane, serving both as a receptor for the preprotein-SecB complex and as an ATP-driven molecular motor driving the stepwise translocation of polypeptide chains across the membrane. The protein is Protein translocase subunit SecA of Rhodopseudomonas palustris (strain TIE-1).